A 445-amino-acid chain; its full sequence is MREIVSCQAGQCGNQIGSKFWEVIADEHGVDPTGSYQGDSDLQLERINVYFDESAGGRYVPRAVLMDLEPGTMDSVRAGPYGQLFRPDNFIFGQSGAGNNWAKGHYTEGAELIDSVLDVCRKEAESCDCLQGFQLSHSLGGGTGSGMGTLLISKLREEYPDRIMMTFSVIPSPRVSDTVVEPYNTTLSVHQLVENSDESMCIDNEALYDICFRTLKLTTPTFGDLNHLVAAVMSGVTCCLRFPGQLNSDLRNRLAVNLVPFPRLHFFMMGFAPLTSRGSQEYRQGLSVADVTQQMFDAKNMMQAADPRHGRYLTASALFRGRMSTKEVDEQMLNVQNKNSSYFIEWIPNNIKSSICDIPPKGLKMSVTFIGNNTCIQEMFRRVGEQFTGMFRRKRFLHWYTGEGMDEMEFTEAESNMNDLVSEYQQYQDATVEEEGEFDEEEEAY.

8 residues coordinate GTP: Q11, E69, S138, G142, T143, G144, N204, and N226. A Mg(2+)-binding site is contributed by E69.

The protein belongs to the tubulin family. As to quaternary structure, dimer of alpha and beta chains. A typical microtubule is a hollow water-filled tube with an outer diameter of 25 nm and an inner diameter of 15 nM. Alpha-beta heterodimers associate head-to-tail to form protofilaments running lengthwise along the microtubule wall with the beta-tubulin subunit facing the microtubule plus end conferring a structural polarity. Microtubules usually have 13 protofilaments but different protofilament numbers can be found in some organisms and specialized cells. The cofactor is Mg(2+).

The protein localises to the cytoplasm. The protein resides in the cytoskeleton. Its function is as follows. Tubulin is the major constituent of microtubules, a cylinder consisting of laterally associated linear protofilaments composed of alpha- and beta-tubulin heterodimers. Microtubules grow by the addition of GTP-tubulin dimers to the microtubule end, where a stabilizing cap forms. Below the cap, tubulin dimers are in GDP-bound state, owing to GTPase activity of alpha-tubulin. The sequence is that of Tubulin beta chain from Leishmania mexicana.